The primary structure comprises 185 residues: uncharacterized protein (185 aa).

The N-terminal stretch at 1-29 (MKNQEIIEVKSKMFLRIWAFVGSAGMGLA) is a signal peptide. The N-palmitoyl cysteine moiety is linked to residue Cys30. The S-diacylglycerol cysteine moiety is linked to residue Cys30. A helical membrane pass occupies residues 45-67 (YLLAIPAGFLFTLFCLYLFIIFF).

The protein to B.subtilis YfjE.

Its subcellular location is the cell membrane. This is an uncharacterized protein from Bacillus subtilis (strain 168).